We begin with the raw amino-acid sequence, 326 residues long: Tagatose 1,6-diphosphate aldolase (326 aa).

It belongs to the aldolase LacD family.

It catalyses the reaction D-tagatofuranose 1,6-bisphosphate = D-glyceraldehyde 3-phosphate + dihydroxyacetone phosphate. Its pathway is carbohydrate metabolism; D-tagatose 6-phosphate degradation; D-glyceraldehyde 3-phosphate and glycerone phosphate from D-tagatose 6-phosphate: step 2/2. The protein is Tagatose 1,6-diphosphate aldolase of Streptococcus pneumoniae serotype 4 (strain ATCC BAA-334 / TIGR4).